Consider the following 372-residue polypeptide: DNA primase small subunit PriS (372 aa).

Residues Asp95, Asp97, and Asp280 contribute to the active site.

The protein belongs to the eukaryotic-type primase small subunit family. In terms of assembly, heterodimer of a small subunit (PriS) and a large subunit (PriL). Requires Mg(2+) as cofactor. The cofactor is Mn(2+).

Catalytic subunit of DNA primase, an RNA polymerase that catalyzes the synthesis of short RNA molecules used as primers for DNA polymerase during DNA replication. The small subunit contains the primase catalytic core and has DNA synthesis activity on its own. Binding to the large subunit stabilizes and modulates the activity, increasing the rate of DNA synthesis while decreasing the length of the DNA fragments, and conferring RNA synthesis capability. The DNA polymerase activity may enable DNA primase to also catalyze primer extension after primer synthesis. May also play a role in DNA repair. This chain is DNA primase small subunit PriS, found in Cenarchaeum symbiosum (strain A).